Here is a 53-residue protein sequence, read N- to C-terminus: Rubredoxin (53 aa).

One can recognise a Rubredoxin-like domain in the interval 1-53 (MQKYVCDICGYVYDPAVGDPDNGVAPGTAFADLPEDWVCPECGVSKDEFSPEA). Residues Cys-6, Cys-9, Cys-39, and Cys-42 each coordinate Fe cation.

Belongs to the rubredoxin family. Requires Fe(3+) as cofactor.

In terms of biological role, rubredoxin is a small nonheme, iron protein lacking acid-labile sulfide. Its single Fe, chelated to 4 Cys, functions as an electron acceptor and may also stabilize the conformation of the molecule. This Butyribacterium methylotrophicum protein is Rubredoxin.